The chain runs to 206 residues: GTP cyclohydrolase 1 (206 aa).

3 residues coordinate Zn(2+): Cys-98, His-101, and Cys-169.

The protein belongs to the GTP cyclohydrolase I family. As to quaternary structure, toroid-shaped homodecamer, composed of two pentamers of five dimers.

The catalysed reaction is GTP + H2O = 7,8-dihydroneopterin 3'-triphosphate + formate + H(+). It functions in the pathway cofactor biosynthesis; 7,8-dihydroneopterin triphosphate biosynthesis; 7,8-dihydroneopterin triphosphate from GTP: step 1/1. This Helicobacter hepaticus (strain ATCC 51449 / 3B1) protein is GTP cyclohydrolase 1.